The primary structure comprises 161 residues: Dehydrin DHN3 (161 aa).

The span at 1-12 (MEHGHATNRVDE) shows a compositional bias: basic and acidic residues. Residues 1 to 161 (MEHGHATNRV…KIKEKLPGQH (161 aa)) are disordered. Over residues 20–38 (HGVGTGMGAHGGVGTGAAA) the composition is skewed to gly residues. 2 stretches are compositionally biased toward low complexity: residues 93–107 (DQQQ…HGHT) and 115–130 (HGAT…QGHT). 2 consecutive repeat copies span residues 101-123 (YGQH…TGGT) and 124-144 (YGQQ…DGTG). The tract at residues 101–144 (YGQHGHTGMTGTGEHGATATGGTYGQQGHTGMTGTGAHGTDGTG) is 2 X approximate tandem repeats. Residues 131 to 142 (GMTGTGAHGTDG) are compositionally biased toward gly residues. A compositionally biased stretch (basic and acidic residues) spans 143 to 161 (TGEKKGIMDKIKEKLPGQH).

The protein belongs to the plant dehydrin family.

In Hordeum vulgare (Barley), this protein is Dehydrin DHN3 (DHN3).